The chain runs to 405 residues: Coenzyme F420 hydrogenase subunit alpha (405 aa).

Cys63, Cys66, Cys380, and Cys383 together coordinate Ni(2+).

Belongs to the [NiFe]/[NiFeSe] hydrogenase large subunit family. As to quaternary structure, heterocomplex of the form (alpha(1)beta(1)gamma(1))(8). Requires Ni(2+) as cofactor. The cofactor is iron-sulfur cluster. FAD is required as a cofactor.

It catalyses the reaction oxidized coenzyme F420-(gamma-L-Glu)(n) + H2 + H(+) = reduced coenzyme F420-(gamma-L-Glu)(n). In terms of biological role, reduces the physiological low-potential two-electron acceptor coenzyme F420, and the artificial one-electron acceptor methylviologen. The sequence is that of Coenzyme F420 hydrogenase subunit alpha (frhA) from Methanothermobacter thermautotrophicus (strain ATCC 29096 / DSM 1053 / JCM 10044 / NBRC 100330 / Delta H) (Methanobacterium thermoautotrophicum).